The chain runs to 1483 residues: Dynein axonemal assembly factor 1 homolog (1483 aa).

6 LRR repeats span residues 34–56 (RLND…EEYT), 57–78 (ELKC…EKLS), 79–100 (KLKC…DPCR), 101–122 (ELDT…GTNV), 125–146 (VLNT…SDLI), and 150–171 (TLSV…KIFE). The region spanning 185–223 (PVVSRLPQYRKTLILACKELTYLDSRPVFPRDRACAEAW) is the LRRCT domain. Disordered stretches follow at residues 249–282 (SINC…TCAE), 300–327 (EEVS…GTSS), 945–986 (DSGD…HGTK), and 1167–1213 (SENE…SIDD). Positions 311–327 (DGTNSSSSLEDNDGTSS) are enriched in polar residues. The segment covering 1183–1196 (TNDKESSDIMEKNG) has biased composition (basic and acidic residues).

It belongs to the DNAAF1 family.

The protein localises to the cell projection. Its subcellular location is the cilium. Cilium-specific protein required for cilia structures. This is Dynein axonemal assembly factor 1 homolog (dtr) from Drosophila melanogaster (Fruit fly).